We begin with the raw amino-acid sequence, 1020 residues long: MSLTSAAGIISLLDEPMPDLKVFALKKLDNIVDEFWPEISESIEKIEMLHEDRSFPENKLAGMVASKVFYHLGSFEDALTYALGAGDLFDVNARNEYTETIIAKCIDFYIAQRVEFIENPKEASVVDERLEGIVNRMIQRCLDDNQFRQALGIALETRRMDTFKDAIMKSDDVRGMLAYAYNVTMSLIQNRGFRNEVLRCLVSLYRDLGVPDYVNMCQCLIFLEDPFAVAEMLDNLTRSSVETNNLMAYQIAFDLYESATQEFLGNVLQHLKNTAPIPTALPSTFKPQGTTSEDGAKSEGDKSKSDEDITEETPADDKVERTIDSLNEVEKLHQKNIEKLISILSGEVSIDLQLQFLIRSNHADLQVLRGTKEAVRVSICHTATVIANAFMHSGTTSDQFLRDNLDWLARATNWAKLTATASLGVIHRGHEKDSLALMQSYLPKEAGPSSGYSEGGALYALGLIHANHGANIIDYLLQQLKDAQNENVRHGGCLGLGLAGMGTHRQDLYEQLKFNLYQDDAVTGEAAGIAMGMVMLGSKNAQAIEDMVSYAQETQHEKILRGLAVGISLTMFSRLEEADPLVTSLSSDKDPVLRRSGMYTIAMAYNGTGSNKAIRKLLHVAVSDVNDDVRRAAVTAIGFILFRSPEQCPSVVSLLAESYNPHVRYGAAMALGIACAGTGLREAIALLEPMVKFDPVNFVRQGALIASAMILIQHTDQSCPKSTFFRQLYAEVISNKHEDVMAKYGAILAQGIIDAGGRNATLSLQSRTGHTNLQAVVGMLAFTQYWYWFPLAHTLSLAFTPTCVIGLNSDLKMPKMEYKSAAKPSLYAYPAPLEEKKSEEREKVATAVLSIAARQKRRENADKKEDEKMDVDEDSKEGAAVKKDEEAKADEKMVTDEKPKKKDEKEKKKEEDKEKEAAGTSSEKDKDKEKDKKEKKEPEPTSEILQNPARVLRQQLKVLSVIDGQSYEPLKDVTIGGIIVFQHTGKAEDQELVEPVAAFGPMNDEEKEPEPPEPFEYIED.

The disordered stretch occupies residues T279 to T322. Polar residues predominate over residues L281–E293. T291 carries the post-translational modification Phosphothreonine. Positions D294–E307 are enriched in basic and acidic residues. Phosphoserine is present on residues S298, S303, and S305. T310 carries the phosphothreonine modification. PC repeat units lie at residues T418 to Y452, G456 to R489, G491 to E525, A526 to L560, G562 to R595, S596 to R631, A632 to R664, G666 to Q701, G702 to A742, and G745 to V777. Disordered stretches follow at residues Q855–R950 and F999–D1020. 2 stretches are compositionally biased toward basic and acidic residues: residues R858 to E867 and K876 to E939. Residues N1003 to D1020 are compositionally biased toward acidic residues.

This sequence belongs to the proteasome subunit S1 family.

Functionally, acts as a regulatory subunit of the 26S proteasome which is involved in the ATP-dependent degradation of ubiquitinated proteins. The sequence is that of 26S proteasome non-ATPase regulatory subunit 1 (Rpn2) from Drosophila melanogaster (Fruit fly).